The chain runs to 242 residues: TGACG-sequence-specific DNA-binding protein TGA-1B (242 aa).

Residues 1–125 (EFCDFSGNQA…HSSPNFENNS (125 aa)) are disordered. A compositionally biased stretch (polar residues) spans 18–45 (DTSSPELRQSSSGSDVLNATSSTSSHQV). Positions 66 to 79 (EGSRESANDNKGLG) are enriched in basic and acidic residues. The span at 88 to 125 (SPESQGSGNYGSNVSEGLNYPSDSNKSVHSSPNFENNS) shows a compositional bias: polar residues. Residues 183 to 242 (DEKKRARLVRNRESAQLSRQRKKHYVEELEDKVRIMHSTIQDLNAKVAYIIAENATLKTQ) form the bZIP domain. The tract at residues 185–216 (KKRARLVRNRESAQLSRQRKKHYVEELEDKVR) is basic motif. A leucine-zipper region spans residues 225–239 (LNAKVAYIIAENATL).

This sequence belongs to the bZIP family.

The protein localises to the nucleus. In terms of biological role, binds specifically to the DNA sequence 5'-TGACG-3'. The sequence is that of TGACG-sequence-specific DNA-binding protein TGA-1B (TGA1B) from Nicotiana tabacum (Common tobacco).